The following is a 114-amino-acid chain: Probable 4-amino-4-deoxy-L-arabinose-phosphoundecaprenol flippase subunit ArnE (114 aa).

3 consecutive transmembrane segments (helical) span residues 38 to 58, 64 to 84, and 94 to 114; these read LTLRWLAIAVVSLGLGMLLWL, LPLSVAYPMLSFNFVLVTLAA, and LRHWLGVAAIMFGILLMSWHL. In terms of domain architecture, EamA spans 43–112; sequence LAIAVVSLGL…IMFGILLMSW (70 aa).

The protein belongs to the ArnE family. In terms of assembly, heterodimer of ArnE and ArnF.

It localises to the cell inner membrane. It functions in the pathway bacterial outer membrane biogenesis; lipopolysaccharide biosynthesis. Translocates 4-amino-4-deoxy-L-arabinose-phosphoundecaprenol (alpha-L-Ara4N-phosphoundecaprenol) from the cytoplasmic to the periplasmic side of the inner membrane. The sequence is that of Probable 4-amino-4-deoxy-L-arabinose-phosphoundecaprenol flippase subunit ArnE from Yersinia pestis bv. Antiqua (strain Antiqua).